The primary structure comprises 366 residues: Peptide chain release factor 2 (366 aa).

Position 253 is an N5-methylglutamine (glutamine 253).

The protein belongs to the prokaryotic/mitochondrial release factor family. Post-translationally, methylated by PrmC. Methylation increases the termination efficiency of RF2.

The protein localises to the cytoplasm. In terms of biological role, peptide chain release factor 2 directs the termination of translation in response to the peptide chain termination codons UGA and UAA. This chain is Peptide chain release factor 2, found in Yersinia pestis.